The chain runs to 290 residues: 33 kDa chaperonin (290 aa).

Disulfide bonds link cysteine 235/cysteine 237 and cysteine 268/cysteine 271.

The protein belongs to the HSP33 family. In terms of processing, under oxidizing conditions two disulfide bonds are formed involving the reactive cysteines. Under reducing conditions zinc is bound to the reactive cysteines and the protein is inactive.

The protein resides in the cytoplasm. In terms of biological role, redox regulated molecular chaperone. Protects both thermally unfolding and oxidatively damaged proteins from irreversible aggregation. Plays an important role in the bacterial defense system toward oxidative stress. This chain is 33 kDa chaperonin, found in Streptococcus pneumoniae (strain JJA).